The primary structure comprises 149 residues: 3-dehydroquinate dehydratase (149 aa).

Tyrosine 26 serves as the catalytic Proton acceptor. Positions 77, 83, and 90 each coordinate substrate. The active-site Proton donor is histidine 103. Residues 104 to 105 (LS) and arginine 114 each bind substrate.

The protein belongs to the type-II 3-dehydroquinase family. As to quaternary structure, homododecamer.

It carries out the reaction 3-dehydroquinate = 3-dehydroshikimate + H2O. The protein operates within metabolic intermediate biosynthesis; chorismate biosynthesis; chorismate from D-erythrose 4-phosphate and phosphoenolpyruvate: step 3/7. Its function is as follows. Catalyzes a trans-dehydration via an enolate intermediate. This is 3-dehydroquinate dehydratase from Vibrio vulnificus (strain YJ016).